The following is a 603-amino-acid chain: ATP-dependent lipid A-core flippase (603 aa).

4 helical membrane-spanning segments follow: residues 20–40 (LGYV…FLIF), 79–99 (LVYA…LGSF), 170–190 (VFLF…MLAI), and 269–289 (PMLQ…VLWL). The ABC transmembrane type-1 domain maps to 31 to 324 (LLSIVGFLIF…LSEVSSTVQR (294 aa)). One can recognise an ABC transporter domain in the interval 356-592 (LEVRNLSFRY…NGHYARLHAM (237 aa)). 390–397 (GRSGSGKS) provides a ligand contact to ATP.

The protein belongs to the ABC transporter superfamily. Lipid exporter (TC 3.A.1.106) family. In terms of assembly, homodimer.

The protein resides in the cell inner membrane. The enzyme catalyses ATP + H2O + lipid A-core oligosaccharideSide 1 = ADP + phosphate + lipid A-core oligosaccharideSide 2.. In terms of biological role, involved in lipopolysaccharide (LPS) biosynthesis. Translocates lipid A-core from the inner to the outer leaflet of the inner membrane. Transmembrane domains (TMD) form a pore in the inner membrane and the ATP-binding domain (NBD) is responsible for energy generation. The protein is ATP-dependent lipid A-core flippase of Pseudomonas aeruginosa (strain ATCC 15692 / DSM 22644 / CIP 104116 / JCM 14847 / LMG 12228 / 1C / PRS 101 / PAO1).